Reading from the N-terminus, the 285-residue chain is Golgi phosphoprotein 3-like (285 aa).

The disordered stretch occupies residues methionine 1–lysine 42. Positions arginine 10–lysine 42 are enriched in basic and acidic residues. 2 residues coordinate a 1,2-diacyl-sn-glycero-3-phospho-(1D-myo-inositol 4-phosphate): tryptophan 67 and arginine 76. A Phosphoserine modification is found at serine 112. 2 residues coordinate a 1,2-diacyl-sn-glycero-3-phospho-(1D-myo-inositol 4-phosphate): arginine 157 and arginine 160. A beta-hairpin required for oligomerization region spans residues glutamate 176 to threonine 187.

It belongs to the GOLPH3/VPS74 family. As to quaternary structure, homooligomer. Does not interact MYO18; differs from GOLPH3 by its inability to interact with MYO18. May interact with ARF1.

The protein localises to the golgi apparatus. Its subcellular location is the golgi stack membrane. It is found in the trans-Golgi network membrane. Functionally, phosphatidylinositol-4-phosphate-binding protein that may antagonize the action of GOLPH3 which is required for the process of vesicle budding at the Golgi and anterograde transport to the plasma membrane. The chain is Golgi phosphoprotein 3-like (GOLPH3L) from Homo sapiens (Human).